We begin with the raw amino-acid sequence, 108 residues long: T cell receptor alpha variable 1-1 (108 aa).

Positions 1–18 (MWGAFLLYVSMKMGGTAG) are cleaved as a signal peptide. The Ig-like domain occupies 19–108 (QSLEQPSEVT…DSASYFCAVR (90 aa)). N-linked (GlcNAc...) asparagine glycosylation is present at Asn38. A disulfide bridge connects residues Cys39 and Cys105.

In terms of assembly, alpha-beta TR is a heterodimer composed of an alpha and beta chain; disulfide-linked. The alpha-beta TR is associated with the transmembrane signaling CD3 coreceptor proteins to form the TR-CD3 (TcR or TCR). The assembly of alpha-beta TR heterodimers with CD3 occurs in the endoplasmic reticulum where a single alpha-beta TR heterodimer associates with one CD3D-CD3E heterodimer, one CD3G-CD3E heterodimer and one CD247 homodimer forming a stable octameric structure. CD3D-CD3E and CD3G-CD3E heterodimers preferentially associate with TR alpha and TR beta chains, respectively. The association of the CD247 homodimer is the last step of TcR assembly in the endoplasmic reticulum and is required for transport to the cell surface.

It localises to the cell membrane. Functionally, v region of the variable domain of T cell receptor (TR) alpha chain that participates in the antigen recognition. Alpha-beta T cell receptors are antigen specific receptors which are essential to the immune response and are present on the cell surface of T lymphocytes. Recognize peptide-major histocompatibility (MH) (pMH) complexes that are displayed by antigen presenting cells (APC), a prerequisite for efficient T cell adaptive immunity against pathogens. Binding of alpha-beta TR to pMH complex initiates TR-CD3 clustering on the cell surface and intracellular activation of LCK that phosphorylates the ITAM motifs of CD3G, CD3D, CD3E and CD247 enabling the recruitment of ZAP70. In turn ZAP70 phosphorylates LAT, which recruits numerous signaling molecules to form the LAT signalosome. The LAT signalosome propagates signal branching to three major signaling pathways, the calcium, the mitogen-activated protein kinase (MAPK) kinase and the nuclear factor NF-kappa-B (NF-kB) pathways, leading to the mobilization of transcription factors that are critical for gene expression and essential for T cell growth and differentiation. The T cell repertoire is generated in the thymus, by V-(D)-J rearrangement. This repertoire is then shaped by intrathymic selection events to generate a peripheral T cell pool of self-MH restricted, non-autoaggressive T cells. Post-thymic interaction of alpha-beta TR with the pMH complexes shapes TR structural and functional avidity. This chain is T cell receptor alpha variable 1-1, found in Homo sapiens (Human).